The following is a 263-amino-acid chain: Dihydromethanophenazine:CoB--CoM heterodisulfide reductase subunit E (263 aa).

The next 5 membrane-spanning stretches (helical) occupy residues 18 to 38, 108 to 128, 150 to 170, 184 to 204, and 221 to 241; these read TFVQ…YGLI, VMHL…GMMF, FLSI…LVAL, IMYD…GFIA, and VAPP…IAFI.

It belongs to the HdrE family. In terms of assembly, the dihydromethanophenazine:CoB--CoM heterodisulfide reductase is composed of two subunits; HdrD and HdrE. It depends on heme b as a cofactor.

The protein localises to the cell membrane. It carries out the reaction methanophenazine + coenzyme B + coenzyme M = dihydromethanophenazine + coenzyme M-coenzyme B heterodisulfide. The protein operates within cofactor metabolism; coenzyme M-coenzyme B heterodisulfide reduction; coenzyme B and coenzyme M from coenzyme M-coenzyme B heterodisulfide: step 1/1. Its function is as follows. Part of a complex that catalyzes the reversible reduction of CoM-S-S-CoB to the thiol-coenzymes H-S-CoM (coenzyme M) and H-S-CoB (coenzyme B). HdrE may be responsible for anchoring the complex to the membrane. This Methanosarcina barkeri (strain Fusaro / DSM 804) protein is Dihydromethanophenazine:CoB--CoM heterodisulfide reductase subunit E (hdrE).